Here is a 204-residue protein sequence, read N- to C-terminus: Thymidine kinase (204 aa).

Residues 23-30 (GSMFSGKT) and 95-98 (DEAQ) contribute to the ATP site. Residue E96 is the Proton acceptor of the active site. The Zn(2+) site is built by C152, C155, C184, and C187.

The protein belongs to the thymidine kinase family. Homotetramer.

The protein localises to the cytoplasm. It catalyses the reaction thymidine + ATP = dTMP + ADP + H(+). This chain is Thymidine kinase, found in Porphyromonas gingivalis (strain ATCC BAA-308 / W83).